Here is a 649-residue protein sequence, read N- to C-terminus: Protein mitoshell (649 aa).

Over residues 167–176 (LRSEARKPRP) the composition is skewed to basic and acidic residues. Disordered regions lie at residues 167 to 193 (LRSEARKPRPESVVPEESSISSLESGA), 389 to 414 (HGPSAFSTPNNQIRNNAASKGQEPTS), and 485 to 512 (ALPSQEIPNAPTPKSSPQSDRPRDVRSY). A compositionally biased stretch (low complexity) spans 177–191 (ESVVPEESSISSLES). Composition is skewed to polar residues over residues 393 to 414 (AFSTPNNQIRNNAASKGQEPTS) and 485 to 503 (ALPSQEIPNAPTPKSSPQS).

Functionally, required for male meiotic cytokinesis through its involvement in the regulation of mitochondrial aggregation and fusion, astral spindle assembly and contractile ring formation. This chain is Protein mitoshell, found in Drosophila melanogaster (Fruit fly).